Reading from the N-terminus, the 115-residue chain is SOSS complex subunit C homolog (115 aa).

This sequence belongs to the SOSS-C family.

This Drosophila mojavensis (Fruit fly) protein is SOSS complex subunit C homolog.